The following is a 563-amino-acid chain: Membrane protein insertase YidC (563 aa).

A helical transmembrane segment spans residues 6–26 (TVLWMIFSFSLLLLWNNWQIH). Residues 36–70 (PAPEAAATQQPKADANGTAASSTASIPSSPAAAPA) are disordered. The span at 54–70 (AASSTASIPSSPAAAPA) shows a compositional bias: low complexity. Transmembrane regions (helical) follow at residues 373–393 (WGWT…PLAA), 443–463 (LPMV…LASV), 482–502 (PFFI…KLNP), and 512–532 (VMMI…AGLV).

The protein belongs to the OXA1/ALB3/YidC family. Type 1 subfamily. In terms of assembly, interacts with the Sec translocase complex via SecD. Specifically interacts with transmembrane segments of nascent integral membrane proteins during membrane integration.

The protein localises to the cell membrane. Required for the insertion and/or proper folding and/or complex formation of integral membrane proteins into the membrane. Involved in integration of membrane proteins that insert both dependently and independently of the Sec translocase complex, as well as at least some lipoproteins. Aids folding of multispanning membrane proteins. In Bordetella bronchiseptica (strain ATCC BAA-588 / NCTC 13252 / RB50) (Alcaligenes bronchisepticus), this protein is Membrane protein insertase YidC.